We begin with the raw amino-acid sequence, 84 residues long: Kappa-conotoxin-like Im11.3 (84 aa).

The N-terminal stretch at 1 to 26 (MMFRLTSVSCFLLVIACLNLFQVVLT) is a signal peptide. 4 disulfides stabilise this stretch: Cys29–Cys43, Cys36–Cys48, Cys42–Cys51, and Cys47–Cys64. The propeptide occupies 71-84 (LRPSHPLFLLLPAR).

It belongs to the conotoxin I2 superfamily. As to expression, expressed by the venom duct.

The protein localises to the secreted. Functionally, inhibits the vertebrate voltage-gated potassium channels Kv1.1/KCNA1 and Kv1.3/KCNA3. The polypeptide is Kappa-conotoxin-like Im11.3 (Conus imperialis (Imperial cone)).